The sequence spans 269 residues: UPF0354 protein YtpQ (269 aa).

The protein belongs to the UPF0354 family.

The sequence is that of UPF0354 protein YtpQ (ytpQ) from Bacillus subtilis (strain 168).